We begin with the raw amino-acid sequence, 117 residues long: Large ribosomal subunit protein bL20c (117 aa).

This sequence belongs to the bacterial ribosomal protein bL20 family.

It localises to the plastid. The protein resides in the chloroplast. Binds directly to 23S ribosomal RNA and is necessary for the in vitro assembly process of the 50S ribosomal subunit. It is not involved in the protein synthesizing functions of that subunit. This Populus trichocarpa (Western balsam poplar) protein is Large ribosomal subunit protein bL20c.